Here is a 415-residue protein sequence, read N- to C-terminus: MFADLDYDIEEDKLGIPTVPGKVTLQKDAQNLIGISIGGGAQYCPCLYIVQVFDNTPAALDGTVAAGDEITGVNGRSIKGKTKVEVAKMIQEVKGEVTIHYNKLQADPKQGMSLDIVLKKVKHRLVENMSSGTADALGLSRAILCNDGLVKRLEELERTAELYKGMTEHTKNLLRAFYELSQTHRAFGDVFSVIGVREPQPAASEAFVKFADAHRSIEKFGIRLLKTIKPMLTDLNTYLNKAIPDTRLTIKKYLDVKFEYLSYCLKVKEMDDEEYSCIALGEPLYRVSTGNYEYRLILRCRQEARARFSQMRKDVLEKMELLDQKHVQDIVFQLQRLVSTMSKYYNDCYAVLRDADVFPIEVDLAHTTLAYGLNQEEFTDGEEEEEEEDTAAGEPSRDTRGAAGPLDKGGSWCDS.

The 84-residue stretch at 22–105 (KVTLQKDAQN…EVTIHYNKLQ (84 aa)) folds into the PDZ domain. Residues Cys44 and Cys46 each contribute to the Zn(2+) site. Thr82 carries the phosphothreonine modification. An AH domain is found at 144–357 (LCNDGLVKRL…CYAVLRDADV (214 aa)). The tract at residues 376–415 (EEFTDGEEEEEEEDTAAGEPSRDTRGAAGPLDKGGSWCDS) is disordered. Residues 377–391 (EFTDGEEEEEEEDTA) are compositionally biased toward acidic residues. Residue Cys413 is the site of S-palmitoyl cysteine; by DHHC8 attachment.

As to quaternary structure, monomer and homodimer. Interacts with CXADR. Interacts presynaptically with the glutamate receptors GRIA2, GRIA3, GRIK3, isoform 3 of GRIA4, isoform A of GRM4, GRM7 and GRM8; with NAPA and NAPB; and with BTG2. The interaction with NAPA and NAPB disrupts the interaction with GRIA2, conducting to the internalization of GRIA2. Interacts with PRKCA; with the amine transporters SLC6A2 and SLC6A3; with the channels ASIC1 and ASIC2; with the GTP-binding proteins ARF1 and ARF3; with the ephrin receptor tyrosine kinases EPHA7, EPHB1 and EPHB2; with ERBB2 and through its PDZ domain with the C-terminal tail of PRLHR. Interacts with UNC5A. Interacts (via AH domain) with NCS1/FREQ; in a calcium-dependent manner. Interacts with F-actin and associates with the ARP2/3 complex. Interacts (via PDZ domain) with ARF1 (activated); the interaction blocks Arp2/3 complex inhibition. Interacts with SORCS3. Post-translationally, phosphorylation at Thr-82 appears to inhibit the interaction with AMPA receptors. In terms of processing, palmitoylation on Cys-413 is essential for long-term synaptic depression (LTD). Ubiquitous.

It is found in the cytoplasm. Its subcellular location is the perinuclear region. It localises to the membrane. The protein resides in the postsynaptic density. The protein localises to the synapse. It is found in the synaptosome. Its subcellular location is the cytoskeleton. Functionally, probable adapter protein that bind to and organize the subcellular localization of a variety of membrane proteins containing some PDZ recognition sequence. Involved in the clustering of various receptors, possibly by acting at the receptor internalization level. Plays a role in synaptic plasticity by regulating the trafficking and internalization of AMPA receptors. May be regulated upon PRKCA activation. May regulate ASIC1/ASIC3 channel. Regulates actin polymerization by inhibiting the actin-nucleating activity of the Arp2/3 complex; the function is competitive with nucleation promoting factors and is linked to neuronal morphology regulation and AMPA receptor (AMPAR) endocytosis. Via interaction with the Arp2/3 complex involved in regulation of synaptic plasicity of excitatory synapses and required for spine shrinkage during long-term depression (LTD). Involved in regulation of astrocyte morphology, antagonistic to Arp2/3 complex activator WASL/N-WASP function. This chain is PRKCA-binding protein (PICK1), found in Homo sapiens (Human).